We begin with the raw amino-acid sequence, 66 residues long: Conotoxin Lt3.5 (66 aa).

A signal peptide spans 1–20; that stretch reads MMSKLGALLTICLLLFPLTA. Positions 21–53 are excised as a propeptide; it reads VPLDGDQPLDRHAERMHDGISPKRHPWFDPVKR. 3 disulfide bridges follow: C54/C66, C55/C62, and C59/C65. P64 carries the post-translational modification 4-hydroxyproline.

It belongs to the conotoxin M superfamily. As to expression, expressed by the venom duct.

The protein localises to the secreted. This chain is Conotoxin Lt3.5, found in Conus litteratus (Lettered cone).